We begin with the raw amino-acid sequence, 475 residues long: Adenylyl cyclase-associated protein 1 (475 aa).

Position 2 is an N-acetylalanine (alanine 2). Tyrosine 31 is modified (phosphotyrosine). The residue at position 34 (serine 34) is a Phosphoserine. Lysine 81 is subject to N6-acetyllysine. Disordered stretches follow at residues 216-237 and 278-319; these read ELSG…PPCP and MKTH…KKEP. A compositionally biased stretch (low complexity) spans 218–228; sequence SGLPSGPSAGS. The residue at position 287 (lysine 287) is an N6-methyllysine. 3 positions are modified to phosphoserine: serine 290, serine 295, and serine 301. The residue at position 307 (threonine 307) is a Phosphothreonine. Residues serine 308 and serine 310 each carry the phosphoserine modification. A C-CAP/cofactor C-like domain is found at 319-453; it reads PAVLELEGKK…EGGDFNEFPV (135 aa). Residue lysine 348 forms a Glycyl lysine isopeptide (Lys-Gly) (interchain with G-Cter in SUMO1) linkage.

Belongs to the CAP family. In terms of assembly, homodimer. Binds actin monomers.

The protein resides in the cell membrane. Its function is as follows. Directly regulates filament dynamics and has been implicated in a number of complex developmental and morphological processes, including mRNA localization and the establishment of cell polarity. The sequence is that of Adenylyl cyclase-associated protein 1 (CAP1) from Homo sapiens (Human).